An 820-amino-acid chain; its full sequence is Protein phosphatase 1 regulatory subunit 29 (820 aa).

Residues 1-22 (MLRLGLCAAALLCVCRPGAVRA) form the signal peptide. The Extracellular portion of the chain corresponds to 23 to 397 (DCWLIEGDKG…APSTSTTTHY (375 aa)). The N-linked (GlcNAc...) asparagine glycan is linked to asparagine 54. 5 LRR repeats span residues 56 to 77 (TVHD…SLNR), 80 to 101 (NLTD…AFLG), 104 to 125 (SLQV…MLRG), 128 to 149 (RLQF…AFSE), and 152 to 173 (SLIS…TFAS). Residues asparagine 80, asparagine 85, and asparagine 117 are each glycosylated (N-linked (GlcNAc...) asparagine). In terms of domain architecture, LRRCT spans 185-247 (NPFNCECDLF…ITVLQAKCRN (63 aa)). 2 N-linked (GlcNAc...) asparagine glycosylation sites follow: asparagine 205 and asparagine 247. Residues 250-294 (LPARPVSHPTPYSTDAQREPDENSGFNPDEILSVEPPASSTTDAS) are disordered. The Fibronectin type-III domain maps to 292–379 (DASAGPAIKL…FNHTCLTFTT (88 aa)). Residues 398-418 (IMTILGCLFGMVIVLGAVYYC) traverse the membrane as a helical segment. The Cytoplasmic portion of the chain corresponds to 419 to 820 (LRKRRMQEEK…WKGVSAQQKL (402 aa)). Disordered regions lie at residues 508–527 (GAGG…LENG) and 589–612 (SATG…SSHH). A phosphoserine mark is found at serine 619, serine 668, and serine 672. A disordered region spans residues 654 to 677 (TGLAKGDSKYIEKGSPLNSPLDRL).

In terms of assembly, interacts with PPP1CA.

The protein resides in the membrane. In terms of biological role, inhibits phosphatase activity of protein phosphatase 1 (PP1) complexes. This Homo sapiens (Human) protein is Protein phosphatase 1 regulatory subunit 29 (ELFN2).